The following is a 258-amino-acid chain: MDNSLLSEIWRQSLAFPWLSAVILNSFLLALAAIAPKKLLTPWGYGHAWVLGVIIWAALGWRGYLVVLAYFFVGSAVTRIGQKEKEAAGIAEKRSGQRGPENVWGSALTAALCALAIAFGPEPWQLWLALGYVASFSTKLSDTTASEVGKAYGKNTFLITTLQPVPRGTEGAVSVEGTLAGFAAGLALAVLGYGVGLISFGGIIFSTLAAFIATNLESVIGATLQNKWPWLTNEVVNGINTFLGAAIAIGIEATAQLI.

Helical transmembrane passes span 14-34 (LAFPWLSAVILNSFLLALAAI), 53-73 (VIIWAALGWRGYLVVLAYFFV), 110-130 (AALCALAIAFGPEPWQLWLAL), 185-205 (GLALAVLGYGVGLISFGGIIF), and 238-258 (GINTFLGAAIAIGIEATAQLI).

This sequence belongs to the TMEM19 family.

The protein localises to the cell membrane. This is an uncharacterized protein from Synechocystis sp. (strain ATCC 27184 / PCC 6803 / Kazusa).